A 517-amino-acid polypeptide reads, in one-letter code: MSPLALVSVSDKKNIIPFCKELIEQFNYKILSSGGTAKHLIDAKIPVIKVADFTNSPEILGGRVKTLHPKIHGGILAKRTDEEHKKDVETNNLELIDLVVVNLYPFKKTVDQGAQWEDAIENIDIGGPSMIRSAAKNHKDVSVLVDPSQYQNFLEESKKGELKDAYKAKLALEAFQHTADYDTAISNWIRKERDLQSSKYIESYPLIKTLRYGENPHQKAFWYGLSNIGWNSAEQLQGKDLSYNNLLDLESALSTVLEFGYTEKDELKTDMFASVILKHNNPCGASISNSASKAFLNALECDSVSAFGGIVAFNSNVDSDTAVHLKDIFLECVVAPSFDEEALEILKVKKNLRILKFSKDQLPKKNQNSTKSIMGGLLVQDTDDSQEKTEDWISVTNKNANNQANLDLNFAWKICKHVKSNAIVIAKDQKTIGIGAGQMNRVGAAKIALKAAGSLCSDAVLASDGFFPFADTVELAHEYGIKAIIQPGGSLRDQESIDMCNLKGISMIFTQKRHFLH.

In terms of domain architecture, MGS-like spans 1-145; that stretch reads MSPLALVSVS…KNHKDVSVLV (145 aa).

This sequence belongs to the PurH family.

It catalyses the reaction (6R)-10-formyltetrahydrofolate + 5-amino-1-(5-phospho-beta-D-ribosyl)imidazole-4-carboxamide = 5-formamido-1-(5-phospho-D-ribosyl)imidazole-4-carboxamide + (6S)-5,6,7,8-tetrahydrofolate. The catalysed reaction is IMP + H2O = 5-formamido-1-(5-phospho-D-ribosyl)imidazole-4-carboxamide. Its pathway is purine metabolism; IMP biosynthesis via de novo pathway; 5-formamido-1-(5-phospho-D-ribosyl)imidazole-4-carboxamide from 5-amino-1-(5-phospho-D-ribosyl)imidazole-4-carboxamide (10-formyl THF route): step 1/1. The protein operates within purine metabolism; IMP biosynthesis via de novo pathway; IMP from 5-formamido-1-(5-phospho-D-ribosyl)imidazole-4-carboxamide: step 1/1. In Prochlorococcus marinus (strain MIT 9301), this protein is Bifunctional purine biosynthesis protein PurH.